Consider the following 1152-residue polypeptide: MNRIFKSIWCEQTRTWVAASEHAVARGGRASSVVASAGGLEKVLKLSILGAASLIAMGVVGPFAEEAMAANNAGVCLTYNGSSNNTSGTGGWFADGCKSAGWVQGMVTNSKTDWVGLTADDTQIVLDGSAGSIYFRTGGINGNVLTMSNATGGVLLSGLAAGVNPTDAVNMSQLTSLSTSTATGITSLSTSTATSIASLSTSMLSLGVGVVTQDASTGAISVGANSPGLTVDFAGGQGPRTLTGVAAGVNATDAVNVGQLASLSTSTAAGLSTAASGVASLSTSLLGAVGDLASLSTSASTGLATADSGIASLSTSLLGTADNVTSLSTSLSTVNANLAGLQTSVDNVVSYDDPSKSAITLGGAGVTTPVLLTNVAAGKIAATSTDAVNGSQLYTLQQEFSQQYDLLTSQVSSLSTSVSGLQGSVSANTGTASGDNSTASGDNATASGTNSTANGTNSTASGDNSTASGTNASASGENSTATGTDSTASGSNSTANGTNSTASGDNSTASGTNASATGENSTATGTDSTASGSNSTANGTNSTASGDNSTASGTNASASGENSTATGTDSTASGSNSTANGTNSTASGDNSTASGTNASATGENSTATGTDSTASGSNSTANGTNSTASGDNSTASGTNASATGENSTATGTDSTASGSNSTANGTNSTASGDNSTASGTNASATGENSTATGTDSTASGSNSTANGTNSTASGDNSTASGTNASATGENSTATGTDSTASGSNSTANGANSTASGDNSTASGTNASATGENSTATGTDSTASGSNSTANGTNSTASGNNSTASGTNASATGENSTATGTDSAASGTNSTANGTNSTASGDNSTASGTNASATGENSTATGTASTASGSNSTANGANSTASGAGATATGENAAATGAGATATGNNASASGTSSTAGGANAIASGENSTTNGANSTASGNGSSAFGESAAAAGDGSTALGANAVASGVGSVATGAGSVASGANSSAYGTGSNATGAGSVAIGQGATASGSNSVALGTGSVASEDNTVSVGSAGSERRITNVAAGVNATDAVNVGQLNSAVSGIRNQMDGMQGQIDTLARDAYSGIAAATALTMIPDVDPGKTLAVGIGTANFKGYQASALGATARITQNLKVKTGVSYSGSNYVWGAGMSYQW.

Positions methionine 1–asparagine 71 are cleaved as a signal peptide. The surface exposed passenger domain stretch occupies residues asparagine 72–glycine 1061. Disordered stretches follow at residues glycine 420–threonine 886 and threonine 900–alanine 949. The span at alanine 427–aspartate 442 shows a compositional bias: polar residues. A compositionally biased stretch (low complexity) spans asparagine 443–glycine 504. Over residues aspartate 505 to glutamate 519 the composition is skewed to polar residues. Low complexity predominate over residues asparagine 520–glycine 588. Residues aspartate 589–glutamate 603 show a composition bias toward polar residues. The span at asparagine 604–glycine 630 shows a compositional bias: low complexity. Polar residues predominate over residues aspartate 631 to glutamate 645. A compositionally biased stretch (low complexity) spans asparagine 646 to glycine 672. The span at aspartate 673 to glutamate 687 shows a compositional bias: polar residues. Residues asparagine 688 to glycine 714 are compositionally biased toward low complexity. A compositionally biased stretch (polar residues) spans aspartate 715–glutamate 729. The segment covering asparagine 730 to glycine 756 has biased composition (low complexity). The segment covering aspartate 757 to glutamate 771 has biased composition (polar residues). Composition is skewed to low complexity over residues asparagine 772–glycine 840 and threonine 848–threonine 886. The outer membrane translocation of the passenger domain stretch occupies residues isoleucine 1062–glycine 1099. The interval lysine 1100–tryptophan 1152 is translocator domain.

The protein belongs to the autotransporter-2 (AT-2) (TC 1.B.40) family. As to quaternary structure, homotrimer.

The protein resides in the cell surface. It localises to the cell outer membrane. Its function is as follows. Involved in virulence. Mediates adherence to human respiratory epithelial cells. This is Autotransporter adhesin BpaC from Burkholderia pseudomallei (strain 1026b).